The chain runs to 476 residues: MSPQTETKASVGFKAGVKDYKLTYYTPEYETKDTDILAAFRVTPQPGVPPEEAGAAVAAESSTGTWTTVWTDGLTSLDRYKGRCYHIEPVPGEADQYICYIAYPLDLFEEGSVTNMFTSIVGNVFGFKRSRALRLEDLRIPPAYAKTFQGPPHGIQVERDKLNKYGRPLLGCTIKPKLGLSAKNYGRACYECLRGGLDFTKDDENVNSQPFMRWRDRFVFCAEAIYKAQAETGEIKGHYLNATAGTCEEMIKRAAFARELGVPIVMHDYLTGGFTANTSLSYYCRDNGLLLHIHRAMHAVIDRQKNHGMHFRVLAKALRMSGGDHIHSGTVVGKLEGEREITLGFVDLLRDDFIEKDRSRGIFFTQDWASMPGVIPVASGGIHVWHMPALTEIFGDDSVLQFGGGTLGHPWGNAPGTAANRVALEACVQARNEGRDLAREGNEIIKAACKWSPELAAACEVWKEIKFEGSKAMDTL.

Positions 1 to 2 (MS) are excised as a propeptide. Residue proline 3 is modified to N-acetylproline. Lysine 14 carries the post-translational modification N6,N6,N6-trimethyllysine. Asparagine 123 and threonine 173 together coordinate substrate. Lysine 175 acts as the Proton acceptor in catalysis. Lysine 177 is a binding site for substrate. Mg(2+)-binding residues include lysine 201, aspartate 203, and glutamate 204. Lysine 201 carries the post-translational modification N6-carboxylysine. Histidine 294 functions as the Proton acceptor in the catalytic mechanism. Positions 295, 327, and 379 each coordinate substrate.

This sequence belongs to the RuBisCO large chain family. Type I subfamily. As to quaternary structure, heterohexadecamer of 8 large chains and 8 small chains; disulfide-linked. The disulfide link is formed within the large subunit homodimers. Mg(2+) is required as a cofactor. Post-translationally, the disulfide bond which can form in the large chain dimeric partners within the hexadecamer appears to be associated with oxidative stress and protein turnover.

It localises to the plastid. The protein resides in the chloroplast. It carries out the reaction 2 (2R)-3-phosphoglycerate + 2 H(+) = D-ribulose 1,5-bisphosphate + CO2 + H2O. It catalyses the reaction D-ribulose 1,5-bisphosphate + O2 = 2-phosphoglycolate + (2R)-3-phosphoglycerate + 2 H(+). Functionally, ruBisCO catalyzes two reactions: the carboxylation of D-ribulose 1,5-bisphosphate, the primary event in carbon dioxide fixation, as well as the oxidative fragmentation of the pentose substrate in the photorespiration process. Both reactions occur simultaneously and in competition at the same active site. The chain is Ribulose bisphosphate carboxylase large chain from Setaria italica (Foxtail millet).